Reading from the N-terminus, the 241-residue chain is CRISPR-associated endoribonuclease Cas6 2 (241 aa).

Tyrosine 28 acts as the Proton acceptor in catalysis. The active-site Proton donor is the histidine 40.

It belongs to the CRISPR-associated protein Cas6/Cse3/CasE family.

Functionally, CRISPR (clustered regularly interspaced short palindromic repeat) is an adaptive immune system that provides protection against mobile genetic elements (viruses, transposable elements and conjugative plasmids). CRISPR clusters contain sequences complementary to antecedent mobile elements and target invading nucleic acids. CRISPR clusters are transcribed and processed into CRISPR RNA (crRNA). This protein processes pre-crRNA into individual crRNA units. This Methanocaldococcus jannaschii (strain ATCC 43067 / DSM 2661 / JAL-1 / JCM 10045 / NBRC 100440) (Methanococcus jannaschii) protein is CRISPR-associated endoribonuclease Cas6 2 (cas6b).